The primary structure comprises 148 residues: 3-hydroxyacyl-[acyl-carrier-protein] dehydratase FabZ (148 aa).

The active site involves histidine 55.

It belongs to the thioester dehydratase family. FabZ subfamily.

Its subcellular location is the cytoplasm. The catalysed reaction is a (3R)-hydroxyacyl-[ACP] = a (2E)-enoyl-[ACP] + H2O. In terms of biological role, involved in unsaturated fatty acids biosynthesis. Catalyzes the dehydration of short chain beta-hydroxyacyl-ACPs and long chain saturated and unsaturated beta-hydroxyacyl-ACPs. This chain is 3-hydroxyacyl-[acyl-carrier-protein] dehydratase FabZ, found in Haemophilus influenzae (strain 86-028NP).